We begin with the raw amino-acid sequence, 604 residues long: Arginine--tRNA ligase (604 aa).

Residues 142–152 carry the 'HIGH' region motif; the sequence is PNIAKEMHVGH.

It belongs to the class-I aminoacyl-tRNA synthetase family. Monomer.

It localises to the cytoplasm. It carries out the reaction tRNA(Arg) + L-arginine + ATP = L-arginyl-tRNA(Arg) + AMP + diphosphate. This is Arginine--tRNA ligase from Prochlorococcus marinus (strain MIT 9312).